The chain runs to 268 residues: Ethylene-responsive transcription factor ERN1 (268 aa).

The segment covering 1-21 (MEIQFQQPNMQNQKAGISVTN) has biased composition (polar residues). Positions 1 to 36 (MEIQFQQPNMQNQKAGISVTNKGGKFKGRNRNSNNT) are disordered. The AP2/ERF DNA-binding region spans 38–95 (KFVGVRQRPSGRWVAEIKDTTQKIRMWLGTFETAEEAARAYDEAACLLRGSNTRTNFI). The tract at residues 114–154 (NRKGDKKQEDGAVASAPSNSKTTISNTSTITSNDDNKESTL) is disordered. The span at 131–146 (SNSKTTISNTSTITSN) shows a compositional bias: low complexity.

The protein belongs to the AP2/ERF transcription factor family. ERF subfamily. Expressed in roots, root hairs and leaves. Expressed in root epidermis and root hairs.

It is found in the nucleus. In terms of biological role, transcription factor involved in symbiotic nodule signaling in response to rhizobial Nod factors (NFs). Binds to the GCC-box (NF-responsive box) of ENOD11 promoter. Acts as a transcriptional activator of NF-responsive box-containing target gene promoters in root hairs. Functions as a transcriptional regulator required for root infection by symbiotic rhizobia, infection thread (IT) formation and maintenance, and nodule development. Necessary for NF-induced gene expression and spontaneous nodulation activated by CCAMK. Functions downstream of CCAMK to activate nodulation gene expression. Involved in early stages of root nodule development. Functions redundantly with ERN2. Is essential with ERN2 for the initiation of root hair infection, and nodule organogenesis and development. Required for accurate expression of the NF signaling genes ENOD11 and ENOD12. The polypeptide is Ethylene-responsive transcription factor ERN1 (Medicago truncatula (Barrel medic)).